A 1829-amino-acid polypeptide reads, in one-letter code: Protein let-418 (1829 aa).

2 stretches are compositionally biased toward acidic residues: residues 1–17 (MSTEEDPSLVDAEESME) and 25–39 (ATEETEEEEEQEQGD). 2 disordered regions span residues 1-81 (MSTE…YNST) and 147-198 (MAAQ…SDQE). The segment covering 48-63 (RSSRKKGGKGGKKGSK) has biased composition (basic residues). 2 PHD-type zinc fingers span residues 256–303 (NDYC…CIEH) and 317–365 (DEFC…CETV). Chromo domains are found at residues 401–458 (LKPP…PPEF) and 489–550 (MQIH…NEDI). Positions 614–798 (RHCWSNGTDA…FHLLNFLSKE (185 aa)) constitute a Helicase ATP-binding domain. 627–634 (DEMGLGKT) contacts ATP. The DEAH box signature appears at 749–752 (DEAH). A Helicase C-terminal domain is found at 930–1093 (LLQKMLRKLK…GKTMSKTELD (164 aa)). Disordered regions lie at residues 1168–1198 (ASYQTKETEGQEEEEEEETEVIKEDEKEPDP), 1234–1289 (SENM…MPPL), 1415–1495 (AANG…ARPS), and 1745–1829 (NGER…PMET). Residues 1177-1186 (GQEEEEEEET) show a composition bias toward acidic residues. 2 stretches are compositionally biased toward polar residues: residues 1234 to 1247 (SENMGTDWSKQNQT) and 1418 to 1427 (GSAQGSSRST). Over residues 1429-1444 (KPKEEPKEEPMEKEDA) the composition is skewed to basic and acidic residues. Over residues 1446-1455 (ETVNGATSEP) the composition is skewed to polar residues. Basic and acidic residues predominate over residues 1474 to 1490 (DEAKEPKEEPIETEKPR). Positions 1749 to 1773 (MEEDEPVEAEEEEGVKQEPDDETQD) are enriched in acidic residues. Residues 1792 to 1811 (DVPSTSAAAAVSSETAADAE) show a composition bias toward low complexity. The span at 1819 to 1829 (APTDEPEPMET) shows a compositional bias: acidic residues.

As to quaternary structure, component of the MEC (MEP-1-containing complex) complex that contains let-418, mep-1 and hda-1. Component of a NURD complex that contains let-418, hda-1, lin-40 and lin-53. Interacts with lin-1. Interacts with pie-1. Interacts with akir-1. As to expression, expressed in embryos and larva.

It localises to the nucleus. Its function is as follows. Part of a NuRD (Nucleosome Remodeling and Deacetylase) complex which is implicated in the synMuv B pathway that negatively regulates specification of vulval cell fate. This negative regulation is thought to be mediated via interaction with the promoter of lin-39, a key regulator in vulva development, and is dependent on the presence lin-1. Contributes to negative regulation of lag-2 which is expressed in the gut during larval development. Has a broad role in development. In association with akir-1, plays a role in regulating the transcription of antimicrobial peptide genes in response to fungal infection. This Caenorhabditis elegans protein is Protein let-418.